The primary structure comprises 395 residues: MALQAATSFLPSALSARKEGAAKDSAFFGVRLADGLKLDATSLGLRTKRVNTSSVAIRAQAAAVSAPTATPASPAGKKTVRTGNAIITGASSGLGLATAKALAESGKWHVIMACRDYLKTARAARAAGMPKGSYTIVHLDLASLDSVRQFVKNVRQLDMPIDVVVCNAAVYQPTAKEPSFTADGFEMSVGVNHLGHFLLARELLEDLKASDYPSKRLIIVGSITGNTNTLAGNVPPKANLGDLRGLAAGLNGVGSAAMIDGAEFDGAKAYKDSKVCNMLTMQEFHRRYHEETGVTFASLYPGCIATTGLFREHIPLFRLLFPPFQKYITKGYVSEEEAGKRLAQVVSEPSLTKSGVYWSWNKNSASFENQLSEEASDTEKARKVWELSEKLVGLA.

The N-terminal 59 residues, M1 to A59, are a transit peptide targeting the chloroplast.

The protein belongs to the short-chain dehydrogenases/reductases (SDR) family. POR subfamily.

It is found in the plastid. It localises to the chloroplast. It catalyses the reaction chlorophyllide a + NADP(+) = protochlorophyllide a + NADPH + H(+). It participates in porphyrin-containing compound metabolism; chlorophyll biosynthesis. Functionally, phototransformation of protochlorophyllide (Pchlide) to chlorophyllide (Chlide). This Hordeum vulgare (Barley) protein is Protochlorophyllide reductase B, chloroplastic (PORB).